The primary structure comprises 688 residues: DNA topoisomerase 1 (688 aa).

The 111-residue stretch at 3-113 folds into the Toprim domain; the sequence is ENLVIVESPA…TENRVVFNEI (111 aa). Residues glutamate 9 and aspartate 82 each coordinate Mg(2+). Residues 129 to 556 enclose the Topo IA-type catalytic domain; sequence EMELVDAQQA…FYSSFKQDVE (428 aa). The tract at residues 163–168 is interaction with DNA; sequence SAGRVQ. Residue tyrosine 298 is the O-(5'-phospho-DNA)-tyrosine intermediate of the active site. A disordered region spans residues 322 to 349; it reads YGNDYTSNRKSKGQGDQDAHEAIRPSST. Residues 334 to 344 show a composition bias toward basic and acidic residues; it reads GQGDQDAHEAI. 3 C4-type zinc fingers span residues 576–602, 616–644, and 657–680; these read CEVCGSPMVIKMGRYGKFMACSNFPDC, CPKCKEGDVVERKSKKNRIFYGCSKYPEC, and CPKCEHYLVEKKQGRKSQVVCSNC.

It belongs to the type IA topoisomerase family. In terms of assembly, monomer. Mg(2+) serves as cofactor.

The catalysed reaction is ATP-independent breakage of single-stranded DNA, followed by passage and rejoining.. In terms of biological role, releases the supercoiling and torsional tension of DNA, which is introduced during the DNA replication and transcription, by transiently cleaving and rejoining one strand of the DNA duplex. Introduces a single-strand break via transesterification at a target site in duplex DNA. The scissile phosphodiester is attacked by the catalytic tyrosine of the enzyme, resulting in the formation of a DNA-(5'-phosphotyrosyl)-enzyme intermediate and the expulsion of a 3'-OH DNA strand. The free DNA strand then undergoes passage around the unbroken strand, thus removing DNA supercoils. Finally, in the religation step, the DNA 3'-OH attacks the covalent intermediate to expel the active-site tyrosine and restore the DNA phosphodiester backbone. This chain is DNA topoisomerase 1, found in Staphylococcus saprophyticus subsp. saprophyticus (strain ATCC 15305 / DSM 20229 / NCIMB 8711 / NCTC 7292 / S-41).